The primary structure comprises 654 residues: DNA ligase (654 aa).

Residues 32 to 36 and 81 to 82 contribute to the NAD(+) site; these read DAVYD and SL. Lys-112 acts as the N6-AMP-lysine intermediate in catalysis. Residues Arg-133, Glu-167, and Lys-306 each coordinate NAD(+). Zn(2+) is bound by residues Cys-400, Cys-403, Cys-416, and Cys-421. In terms of domain architecture, BRCT spans 577-654; it reads ESSSIFSHKT…EEELLKYLKE (78 aa).

The protein belongs to the NAD-dependent DNA ligase family. LigA subfamily. Mg(2+) serves as cofactor. Mn(2+) is required as a cofactor.

It catalyses the reaction NAD(+) + (deoxyribonucleotide)n-3'-hydroxyl + 5'-phospho-(deoxyribonucleotide)m = (deoxyribonucleotide)n+m + AMP + beta-nicotinamide D-nucleotide.. Functionally, DNA ligase that catalyzes the formation of phosphodiester linkages between 5'-phosphoryl and 3'-hydroxyl groups in double-stranded DNA using NAD as a coenzyme and as the energy source for the reaction. It is essential for DNA replication and repair of damaged DNA. The protein is DNA ligase of Helicobacter acinonychis (strain Sheeba).